The chain runs to 467 residues: UDP-N-acetylmuramate--L-alanine ligase (467 aa).

An ATP-binding site is contributed by 114-120 (GTHGKTT).

Belongs to the MurCDEF family.

It is found in the cytoplasm. The enzyme catalyses UDP-N-acetyl-alpha-D-muramate + L-alanine + ATP = UDP-N-acetyl-alpha-D-muramoyl-L-alanine + ADP + phosphate + H(+). Its pathway is cell wall biogenesis; peptidoglycan biosynthesis. Cell wall formation. The polypeptide is UDP-N-acetylmuramate--L-alanine ligase (Rhodopseudomonas palustris (strain BisB5)).